Consider the following 490-residue polypeptide: Tandem C2 domains nuclear protein (490 aa).

Phosphoserine occurs at positions 83, 156, 168, 174, and 211. Positions 189 to 215 are disordered; sequence HDSLSSVPSSSSSRKNSQGSNRSLDTI. The span at 192–211 shows a compositional bias: low complexity; the sequence is LSSVPSSSSSRKNSQGSNRS. Thr214 and Thr216 each carry phosphothreonine. Ser218 is modified (phosphoserine). 2 C2 domains span residues 223-342 and 344-471; these read DFGR…SLDI and PPSK…NQWK. Residues 447–449 carry the Nuclear localization signal motif; sequence RRK.

The protein resides in the nucleus. The sequence is that of Tandem C2 domains nuclear protein (TC2N) from Homo sapiens (Human).